Consider the following 204-residue polypeptide: Fruiting body protein SC7 (204 aa).

Positions 1 to 16 (MKLTVILLTAVLAASA) are cleaved as a signal peptide. The SCP domain maps to 62-185 (LKAHNNERAQ…KTLWYYVCNY (124 aa)). N80, N118, and N134 each carry an N-linked (GlcNAc...) asparagine glycan.

Belongs to the CRISP family.

The protein localises to the secreted. This Schizophyllum commune (Split gill fungus) protein is Fruiting body protein SC7 (SC7).